A 424-amino-acid polypeptide reads, in one-letter code: Ankyrin repeat domain-containing protein 61 (424 aa).

7 ANK repeats span residues 80–109 (LSFL…DPEA), 113–169 (QGFT…ARVD), 172–201 (HRHC…QVNA), 205–234 (SSMT…SVNC), 239–278 (TGNT…QVNA), 282–311 (DGQA…NVNI), and 315–348 (NGES…PLRL).

This Bos taurus (Bovine) protein is Ankyrin repeat domain-containing protein 61 (ANKRD61).